Consider the following 445-residue polypeptide: MARLFGTDGVRGVANRDLTAELALALGSAAARRLSTAGHARRRVAVVGRDPRASGEMLEAAVIAGLTSEGVDALRVGVLPTPAVAYLTSAYDADFGVMISASHNPMPDNGIKIFGPGGHKLDDATEDRIAELVQQGPGERPVGAGIGRVVDAPDALDRYLRHVGKAVTTRLDALTVVVDCAHGAASAAAPLAYRAAGANVLTINADPNGLNINDGCGSTHMETLQAAVVSYGADLGLAHDGDADRCLAVDANGRVIDGDAIMVVLALAMRESGELASDTLVATVMSNLGLHLAMRDAGIEVRTTSVGDRYVLEELRAGSYSLGGEQSGHIVMPSMGTTGDGILTGLRLMSRMAQTRKSLAALAEPMHTLPQVLINVQVADKTTVAQAPSVQSAVAEAEAALGDTGRILLRPSGTEQVVRVMVEAADEDTARQLAVRVAESVSEQR.

Residue serine 102 is the Phosphoserine intermediate of the active site. Mg(2+) contacts are provided by serine 102, aspartate 240, aspartate 242, and aspartate 244. Serine 102 carries the post-translational modification Phosphoserine.

The protein belongs to the phosphohexose mutase family. Mg(2+) serves as cofactor. Activated by phosphorylation.

It carries out the reaction alpha-D-glucosamine 1-phosphate = D-glucosamine 6-phosphate. Functionally, catalyzes the conversion of glucosamine-6-phosphate to glucosamine-1-phosphate. The chain is Phosphoglucosamine mutase from Mycobacterium sp. (strain JLS).